Consider the following 194-residue polypeptide: Small ribosomal subunit protein uS7 (194 aa).

It belongs to the universal ribosomal protein uS7 family. In terms of assembly, part of the 30S ribosomal subunit.

Functionally, one of the primary rRNA binding proteins, it binds directly to 16S rRNA where it nucleates assembly of the head domain of the 30S subunit. Is located at the subunit interface close to the decoding center. This chain is Small ribosomal subunit protein uS7, found in Methanococcus vannielii (strain ATCC 35089 / DSM 1224 / JCM 13029 / OCM 148 / SB).